Reading from the N-terminus, the 308-residue chain is Ornithine carbamoyltransferase (308 aa).

Carbamoyl phosphate is bound by residues 57–60 (STRT), glutamine 84, arginine 108, and 135–138 (HPCQ). L-ornithine-binding positions include asparagine 166, aspartate 224, and 228–229 (SM). Residues 264 to 265 (CL) and arginine 292 contribute to the carbamoyl phosphate site.

The protein belongs to the aspartate/ornithine carbamoyltransferase superfamily. OTCase family.

Its subcellular location is the cytoplasm. The catalysed reaction is carbamoyl phosphate + L-ornithine = L-citrulline + phosphate + H(+). It participates in amino-acid biosynthesis; L-arginine biosynthesis; L-arginine from L-ornithine and carbamoyl phosphate: step 1/3. Functionally, reversibly catalyzes the transfer of the carbamoyl group from carbamoyl phosphate (CP) to the N(epsilon) atom of ornithine (ORN) to produce L-citrulline. In Ralstonia nicotianae (strain ATCC BAA-1114 / GMI1000) (Ralstonia solanacearum), this protein is Ornithine carbamoyltransferase.